The primary structure comprises 207 residues: Small ribosomal subunit protein uS4 (207 aa).

A disordered region spans residues 31–53 (KAKFDSKPGQHGRTSGTRTSDFG). Residues 42 to 52 (GRTSGTRTSDF) show a composition bias toward polar residues. Positions 97-158 (SRLDNVVYRM…KSKKQTRVTE (62 aa)) constitute an S4 RNA-binding domain.

It belongs to the universal ribosomal protein uS4 family. In terms of assembly, part of the 30S ribosomal subunit. Contacts protein S5. The interaction surface between S4 and S5 is involved in control of translational fidelity.

Functionally, one of the primary rRNA binding proteins, it binds directly to 16S rRNA where it nucleates assembly of the body of the 30S subunit. In terms of biological role, with S5 and S12 plays an important role in translational accuracy. In Polaromonas sp. (strain JS666 / ATCC BAA-500), this protein is Small ribosomal subunit protein uS4.